The primary structure comprises 134 residues: MGKDTLSEIVTSIRNADMAKKETVRITFTNIAQNIVTILLREGFIKNAREHRESKKSFLVLTLRHRRNRKGPSRTLFNLKRVSRPGLRIYSNYQKIPRILGGMGVAILSTSKGIMTDREARLKRIGGEILLYIW.

It belongs to the universal ribosomal protein uS8 family. In terms of assembly, part of the 30S ribosomal subunit.

The protein localises to the plastid. Its subcellular location is the chloroplast. Its function is as follows. One of the primary rRNA binding proteins, it binds directly to 16S rRNA central domain where it helps coordinate assembly of the platform of the 30S subunit. This chain is Small ribosomal subunit protein uS8c (rps8), found in Pelargonium hortorum (Common geranium).